Consider the following 1242-residue polypeptide: ATP-dependent helicase/nuclease subunit A (1242 aa).

Positions 12-487 (SRWTDEQWKA…IDLASNFRSR (476 aa)) constitute a UvrD-like helicase ATP-binding domain. 33–40 (AAAGSGKT) lines the ATP pocket. The UvrD-like helicase C-terminal domain maps to 514–808 (AAQLKYGADY…RVMTIHSSKG (295 aa)).

Belongs to the helicase family. AddA subfamily. In terms of assembly, heterodimer of AddA and AddB/RexB. The cofactor is Mg(2+).

It carries out the reaction Couples ATP hydrolysis with the unwinding of duplex DNA by translocating in the 3'-5' direction.. The enzyme catalyses ATP + H2O = ADP + phosphate + H(+). Its function is as follows. The heterodimer acts as both an ATP-dependent DNA helicase and an ATP-dependent, dual-direction single-stranded exonuclease. Recognizes the chi site generating a DNA molecule suitable for the initiation of homologous recombination. The AddA nuclease domain is required for chi fragment generation; this subunit has the helicase and 3' -&gt; 5' nuclease activities. The sequence is that of ATP-dependent helicase/nuclease subunit A from Geobacillus thermodenitrificans (strain NG80-2).